The following is a 301-amino-acid chain: Cilia- and flagella-associated protein 161 (301 aa).

Its subcellular location is the cytoplasm. It is found in the cytoskeleton. It localises to the cilium axoneme. Functionally, microtubule inner protein (MIP) part of the dynein-decorated doublet microtubules (DMTs) in cilia axoneme, which is required for motile cilia beating. In Danio rerio (Zebrafish), this protein is Cilia- and flagella-associated protein 161.